Reading from the N-terminus, the 590-residue chain is Beta-(1--&gt;2)glucan export ATP-binding/permease protein NdvA (590 aa).

The ABC transmembrane type-1 domain maps to 21-301; it reads VALICGANVA…MSAFANQISE (281 aa). 6 helical membrane-spanning segments follow: residues 22–42, 55–75, 136–156, 158–178, 248–268, and 275–295; these read ALICGANVALAAIAILEPIMF, VFSTLAVWAGLGAFNVIAFVL, QHLSTAVALVLLVPTALSMDV, MSMVLLGLGVLYVGIGRLVMK, LSSTISMMVVLLIGAYLVTHG, and VIAFTGFATLLISRLDQMSAF. The region spanning 335-569 is the ABC transporter domain; that stretch reads VRFEDVGFEF…NGRFASLLRA (235 aa). 368 to 375 lines the ATP pocket; the sequence is GPTGAGKT.

Belongs to the ABC transporter superfamily. Beta-(1--&gt;2)glucan exporter (TC 3.A.1.108.1) family. In terms of assembly, homodimer.

It localises to the cell inner membrane. It catalyses the reaction [(1-&gt;2)-beta-D-glucosyl](n)(in) + ATP + H2O = [(1-&gt;2)-beta-D-glucosyl](n)(out) + ADP + phosphate + H(+). Involved in beta-(1--&gt;2)glucan export. Transmembrane domains (TMD) form a pore in the inner membrane and the ATP-binding domain (NBD) is responsible for energy generation. This is Beta-(1--&gt;2)glucan export ATP-binding/permease protein NdvA from Mesorhizobium japonicum (strain LMG 29417 / CECT 9101 / MAFF 303099) (Mesorhizobium loti (strain MAFF 303099)).